We begin with the raw amino-acid sequence, 955 residues long: RNA polymerase-associated protein RapA (955 aa).

A Helicase ATP-binding domain is found at 163–333 (EVGHRYAPRV…FARLRLLDPE (171 aa)). ATP is bound at residue 176-183 (DEVGLGKT). The short motif at 279-282 (DEAH) is the DEAH box element. The Helicase C-terminal domain occupies 478-642 (RVEWLLELLL…AVRDELFELL (165 aa)).

It belongs to the SNF2/RAD54 helicase family. RapA subfamily. In terms of assembly, interacts with the RNAP. Has a higher affinity for the core RNAP than for the holoenzyme. Its ATPase activity is stimulated by binding to RNAP.

In terms of biological role, transcription regulator that activates transcription by stimulating RNA polymerase (RNAP) recycling in case of stress conditions such as supercoiled DNA or high salt concentrations. Probably acts by releasing the RNAP, when it is trapped or immobilized on tightly supercoiled DNA. Does not activate transcription on linear DNA. Probably not involved in DNA repair. This Aeromonas hydrophila subsp. hydrophila (strain ATCC 7966 / DSM 30187 / BCRC 13018 / CCUG 14551 / JCM 1027 / KCTC 2358 / NCIMB 9240 / NCTC 8049) protein is RNA polymerase-associated protein RapA.